A 475-amino-acid chain; its full sequence is Glutamate--tRNA ligase 2 (475 aa).

Residues Pro-9–Ser-19 carry the 'HIGH' region motif. The 'KMSKS' region signature appears at Lys-238–Arg-242. Lys-241 lines the ATP pocket.

This sequence belongs to the class-I aminoacyl-tRNA synthetase family. Glutamate--tRNA ligase type 1 subfamily. As to quaternary structure, monomer.

The protein localises to the cytoplasm. The enzyme catalyses tRNA(Glu) + L-glutamate + ATP = L-glutamyl-tRNA(Glu) + AMP + diphosphate. In terms of biological role, catalyzes the attachment of glutamate to tRNA(Glu) in a two-step reaction: glutamate is first activated by ATP to form Glu-AMP and then transferred to the acceptor end of tRNA(Glu). This chain is Glutamate--tRNA ligase 2, found in Bartonella quintana (strain Toulouse) (Rochalimaea quintana).